A 282-amino-acid chain; its full sequence is Biotin synthase (282 aa).

In terms of domain architecture, Radical SAM core spans 1–228 (MQEIFLCSIS…NARLMVAGGR (228 aa)). The [4Fe-4S] cluster site is built by Cys-17, Cys-21, and Cys-24. [2Fe-2S] cluster contacts are provided by Cys-61, Cys-96, Cys-154, and Arg-221.

It belongs to the radical SAM superfamily. Biotin synthase family. Homodimer. Requires [4Fe-4S] cluster as cofactor. The cofactor is [2Fe-2S] cluster.

It carries out the reaction (4R,5S)-dethiobiotin + (sulfur carrier)-SH + 2 reduced [2Fe-2S]-[ferredoxin] + 2 S-adenosyl-L-methionine = (sulfur carrier)-H + biotin + 2 5'-deoxyadenosine + 2 L-methionine + 2 oxidized [2Fe-2S]-[ferredoxin]. Its pathway is cofactor biosynthesis; biotin biosynthesis; biotin from 7,8-diaminononanoate: step 2/2. In terms of biological role, catalyzes the conversion of dethiobiotin (DTB) to biotin by the insertion of a sulfur atom into dethiobiotin via a radical-based mechanism. In Helicobacter pylori (strain Shi470), this protein is Biotin synthase.